Here is a 359-residue protein sequence, read N- to C-terminus: Mitochondrial glutathione transporter SLC25A39 (359 aa).

At 1–14 (MDDQDPGGISPLQQ) the chain is on the mitochondrial intermembrane side. 3 Solcar repeats span residues 9–151 (ISPL…LKAF), 159–243 (SDLY…VKSQ), and 253–347 (TSVG…GKSF). The helical transmembrane segment at 15-35 (MVASGAGAVVTSLFMTPLDVV) threads the bilayer. Residues 36–121 (KVRLQSQRPT…VKIVRHEGTR (86 aa)) are Mitochondrial matrix-facing. Positions 74, 78, 88, and 94 each coordinate [2Fe-2S] cluster. The chain crosses the membrane as a helical span at residues 122-142 (TLWSGLPATLVMTVPATAIYF). Over 143–164 (TAYDQLKAFLCGQSLTSDLYAP) the chain is Mitochondrial intermembrane. The chain crosses the membrane as a helical span at residues 165-185 (MVAGALARMGTVTVVSPLELV). Over 186 to 214 (RTKLQAQHVSYRELAACVQAAVAQGGWRS) the chain is Mitochondrial matrix. A helical membrane pass occupies residues 215–235 (LWLGWGPTALRDVPFSALYWF). The Mitochondrial intermembrane portion of the chain corresponds to 236 to 255 (NYELVKSQLNGPRQKEQTSV). A helical transmembrane segment spans residues 256–276 (GISFVAGGISGMVAATLTLPF). At 277–317 (DVVKTQRQMSLGAVEAMRVKPPRVDSTWLLLRRIQAESGTR) the chain is on the mitochondrial matrix side. The chain crosses the membrane as a helical span at residues 318 to 338 (GLFAGFLPRIIKAAPSCAIMI). At 339 to 359 (STYEFGKSFFHRLNQEQPLGH) the chain is on the mitochondrial intermembrane side.

The protein belongs to the mitochondrial carrier (TC 2.A.29) family. Cleaved and degraded by AFG3L2; degradation by AFG3L2 is regulated by the ability of SLC25A39 to bind iron-sulfur. In absence of mitochondrial glutathione, SLC25A39 binds iron-sulfur, preventing cleavage and degradation by AFG3L2. The presence of mitochondrial glutathione prevents iron-sulfur-binding to SLC25A39, promoting cleavage and degradation by AFG3L2.

The protein resides in the mitochondrion inner membrane. It carries out the reaction glutathione(in) = glutathione(out). The activity of SLC25A39 is regulated by levels of mitochondrial glutathione via its ability to bind [2Fe-2S] iron-sulfur cluster. Upon physiological levels of mitochondrial glutathione, glutathione prevents iron-sulfur-binding to SLC25A39 promoting cleavage and degradation by AFG3L2. Upon depletion of mitochondrial glutathione, SLC25A39 binds iron-sulfur, preventing cleavage and degradation by AFG3L2. In terms of biological role, mitochondrial transporter required for glutathione import into mitochondria. Glutathione, which plays key roles in oxidative metabolism, is produced exclusively in the cytosol and is imported in many organelles. Mitochondrial glutathione is required for the activity and stability of proteins containing iron-sulfur clusters, as well as erythropoiesis. This chain is Mitochondrial glutathione transporter SLC25A39 (Slc25a39), found in Rattus norvegicus (Rat).